Here is a 209-residue protein sequence, read N- to C-terminus: Small ribosomal subunit protein uS3 (209 aa).

The KH type-2 domain maps to 17–86 (IDEYLEKELR…NPQIEVEEIK (70 aa)).

Belongs to the universal ribosomal protein uS3 family. Part of the 30S ribosomal subunit.

Its function is as follows. Binds the lower part of the 30S subunit head. The chain is Small ribosomal subunit protein uS3 from Thermococcus gammatolerans (strain DSM 15229 / JCM 11827 / EJ3).